Consider the following 84-residue polypeptide: uncharacterized protein (84 aa).

3 helical membrane-spanning segments follow: residues 8–28 (IYFF…VNLL), 30–50 (INVI…ISTI), and 63–83 (VLFM…LYIP).

The protein localises to the cell membrane. This is an uncharacterized protein from Methanocaldococcus jannaschii (strain ATCC 43067 / DSM 2661 / JAL-1 / JCM 10045 / NBRC 100440) (Methanococcus jannaschii).